The sequence spans 1032 residues: MAWEARREPGPRRAAVRETVMLLLCLGVPTGRPYNVDTESALLYQGPHNTLFGYSVVLHSHGANRWLLVGAPTANWLANASVINPGAIYRCRIGKNPGQTCEQLQLGSPNGEPCGKTCLEERDNQWLGVTLSRQPGENGSIVTCGHRWKNIFYIKNENKLPTGGCYGVPPDLRTELSKRIAPCYQDYVKKFGENFASCQAGISSFYTKDLIVMGAPGSSYWTGSLFVYNITTNKYKAFLDKQNQVKFGSYLGYSVGAGHFRSQHTTEVVGGAPQHEQIGKAYIFSIDEKELNILHEMKGKKLGSYFGASVCAVDLNADGFSDLLVGAPMQSTIREEGRVFVYINSGSGAVMNAMETNLVGSDKYAARFGESIVNLGDIDNDGFEDVAIGAPQEDDLQGAIYIYNGRADGISSTFSQRIEGLQISKSLSMFGQSISGQIDADNNGYVDVAVGAFRSDSAVLLRTRPVVIVDASLSHPESVNRTKFDCVENGWPSVCIDLTLCFSYKGKEVPGYIVLFYNMSLDVNRKAESPPRFYFSSNGTSDVITGSIQVSSREANCRTHQAFMRKDVRDILTPIQIEAAYHLGPHVISKRSTEEFPPLQPILQQKKEKDIMKKTINFARFCAHENCSADLQVSAKIGFLKPHENKTYLAVGSMKTLMLNVSLFNAGDDAYETTLHVKLPVGLYFIKILELEEKQINCEVTDNSGVVQLDCSIGYIYVDHLSRIDISFLLDVSSLSRAEEDLSITVHATCENEEEMDNLKHSRVTVAIPLKYEVKLTVHGFVNPTSFVYGSNDENEPETCMVEKMNLTFHVINTGNSMAPNVSVEIMVPNSFSPQTDKLFNILDVQTTTGECHFENYQRVCALEQQKSAMQTLKGIVRFLSKTDKRLLYCIKADPHCLNFLCNFGKMESGKEASVHIQLEGRPSILEMDETSALKFEIRATGFPEPNPRVIELNKDENVAHVLLEGLHHQRPKRYFTIVIISSSLLLGLIVLLLISYVMWKAGFFKRQYKSILQEENRRDSWSYINSKSNDD.

Positions 1–33 (MAWEARREPGPRRAAVRETVMLLLCLGVPTGRP) are cleaved as a signal peptide. FG-GAP repeat units lie at residues 35-100 (NVDT…PGQT), 110-177 (NGEP…TELS), 185-237 (QDYV…KYKA), 238-291 (FLDK…EKEL), 292-351 (NILH…GAVM), 355-412 (ETNL…GISS), and 416-478 (QRIE…HPES). Topologically, residues 35-977 (NVDTESALLY…HHQRPKRYFT (943 aa)) are extracellular. The N-linked (GlcNAc...) asparagine glycan is linked to asparagine 79. Cysteine 91 and cysteine 101 are disulfide-bonded. Asparagine 138 carries N-linked (GlcNAc...) asparagine glycosylation. Intrachain disulfides connect cysteine 144/cysteine 165 and cysteine 183/cysteine 198. Asparagine 229 carries N-linked (GlcNAc...) asparagine glycosylation. Positions 314, 316, 318, 322, 377, 379, 381, 385, 439, 441, 443, 445, and 447 each coordinate Ca(2+). N-linked (GlcNAc...) asparagine glycosylation occurs at asparagine 480. 2 disulfides stabilise this stretch: cysteine 486-cysteine 495 and cysteine 501-cysteine 557. Residues asparagine 518 and asparagine 538 are each glycosylated (N-linked (GlcNAc...) asparagine). The SG1 signature appears at 606-616 (KKEKDIMKKTI). Residues cysteine 622 and cysteine 627 are joined by a disulfide bond. N-linked (GlcNAc...) asparagine glycosylation is found at asparagine 626, asparagine 645, and asparagine 660. Residues cysteine 698 and cysteine 711 are joined by a disulfide bond. Asparagine 806 and asparagine 821 each carry an N-linked (GlcNAc...) asparagine glycan. Disulfide bonds link cysteine 852–cysteine 890 and cysteine 897–cysteine 902. A helical transmembrane segment spans residues 978-1001 (IVIISSSLLLGLIVLLLISYVMWK). The Cytoplasmic portion of the chain corresponds to 1002-1032 (AGFFKRQYKSILQEENRRDSWSYINSKSNDD). The GFFKR motif motif lies at 1003–1007 (GFFKR). Serine 1021 carries the phosphoserine modification.

This sequence belongs to the integrin alpha chain family. Heterodimer of an alpha and a beta subunit. The alpha subunit can sometimes be cleaved into two non-covalently associated fragments. Alpha-4 associates with either beta-1 or beta-7. Alpha-4 interacts with PXN, LPXN, and TGFB1I1/HIC5. Interacts with CSPG4 through CSPG4 chondroitin sulfate glycosaminoglycan. Interacts with JAML; integrin alpha-4/beta-1 may regulate leukocyte to endothelial cells adhesion by controlling JAML homodimerization. ITGA4:ITGB1 is found in a ternary complex with CX3CR1 and CX3CL1. Interacts with MDK. ITGA4:ITGB1 interacts with MDK; this interaction mediates MDK-induced osteoblast cells migration through PXN phosphorylation. Integrin ITGA4:ITGB1 interacts with SVEP1 (via Sushi domain 21); thereby inhibits Ca(2+) intracellular signaling and as a result represses vasocontraction. ITGA4:ITGB1 interacts with SELP. ITGA4:ITGB1 interacts with BCAM. Phosphorylation on Ser-1027 inhibits PXN binding. As to expression, expressed in vascular smooth muscle cells (at protein level).

The protein resides in the membrane. Its function is as follows. Integrins alpha-4/beta-1 (VLA-4) and alpha-4/beta-7 are receptors for fibronectin. They recognize one or more domains within the alternatively spliced CS-1 and CS-5 regions of fibronectin. They are also receptors for VCAM1. Integrin alpha-4/beta-1 recognizes the sequence Q-I-D-S in VCAM1. Integrin alpha-4/beta-7 is also a receptor for MADCAM1. It recognizes the sequence L-D-T in MADCAM1. On activated endothelial cells integrin VLA-4 triggers homotypic aggregation for most VLA-4-positive leukocyte cell lines. It may also participate in cytolytic T-cell interactions with target cells. ITGA4:ITGB1 binds to fractalkine (CX3CL1) and may act as its coreceptor in CX3CR1-dependent fractalkine signaling. ITGA4:ITGB1 binds to PLA2G2A via a site (site 2) which is distinct from the classical ligand-binding site (site 1) and this induces integrin conformational changes and enhanced ligand binding to site 1. Integrin ITGA4:ITGB1 represses PRKCA-mediated L-type voltage-gated channel Ca(2+) influx and ROCK-mediated calcium sensitivity in vascular smooth muscle cells via its interaction with SVEP1, thereby inhibiting vasocontraction. This chain is Integrin alpha-4 (ITGA4), found in Homo sapiens (Human).